The chain runs to 283 residues: Apidaecins type 73 (283 aa).

The N-terminal stretch at 1-18 (KNFALAILVVTFVVAVFG) is a signal peptide. 9 consecutive propeptides follow at residues 19-41 (NTNL…EAEP), 62-69 (EAEPEAEP), 90-97 (EAELEAEP), 118-125 (EAEPEAEP), 146-153 (EAELEAEP), 174-181 (EAEPEAEP), 202-209 (EAEPEAEP), 230-237 (EAEPEAEP), and 258-265 (EAKPEAKP). The interval 19–283 (NTNLDPPTRP…PQPRPPHPRI (265 aa)) is disordered. The segment covering 273-283 (IPQPRPPHPRI) has biased composition (pro residues).

It belongs to the apidaecin family.

It is found in the secreted. Its function is as follows. Apidaecins have bactericidal activity; predominantly against Gram-negative bacteria. They seem to interfere with cell propagation. The polypeptide is Apidaecins type 73 (APID73) (Apis mellifera (Honeybee)).